A 111-amino-acid polypeptide reads, in one-letter code: Probable 4-amino-4-deoxy-L-arabinose-phosphoundecaprenol flippase subunit ArnE (111 aa).

Residues 1–35 lie on the Cytoplasmic side of the membrane; it reads MIWLTLVFASLLSVAGQLCQKQATCFVAINKRRKH. A helical membrane pass occupies residues 36 to 56; sequence IVLWLGLALACLGLAMVLWLL. The EamA domain occupies 40–109; that stretch reads LGLALACLGL…IIGGIVILGS (70 aa). Topologically, residues 57–60 are periplasmic; that stretch reads VLQN. A helical transmembrane segment spans residues 61-81; the sequence is VPVGIAYPMLSLNFVWVTLAA. Residues 82–87 lie on the Cytoplasmic side of the membrane; it reads VKLWHE. A helical transmembrane segment spans residues 88-108; sequence PVSPRHWCGVAFIIGGIVILG. Topologically, residues 109–111 are periplasmic; the sequence is STV.

It belongs to the ArnE family. Heterodimer of ArnE and ArnF.

It is found in the cell inner membrane. The protein operates within bacterial outer membrane biogenesis; lipopolysaccharide biosynthesis. Translocates 4-amino-4-deoxy-L-arabinose-phosphoundecaprenol (alpha-L-Ara4N-phosphoundecaprenol) from the cytoplasmic to the periplasmic side of the inner membrane. The polypeptide is Probable 4-amino-4-deoxy-L-arabinose-phosphoundecaprenol flippase subunit ArnE (Escherichia coli (strain ATCC 8739 / DSM 1576 / NBRC 3972 / NCIMB 8545 / WDCM 00012 / Crooks)).